The following is a 595-amino-acid chain: Elongation factor 4 (595 aa).

One can recognise a tr-type G domain in the interval 2 to 183 (KNIRNFCIIA…AIVEQVPAPA (182 aa)). GTP contacts are provided by residues 14–19 (DHGKST) and 130–133 (NKVD).

It belongs to the TRAFAC class translation factor GTPase superfamily. Classic translation factor GTPase family. LepA subfamily.

The protein localises to the cell inner membrane. It carries out the reaction GTP + H2O = GDP + phosphate + H(+). Functionally, required for accurate and efficient protein synthesis under certain stress conditions. May act as a fidelity factor of the translation reaction, by catalyzing a one-codon backward translocation of tRNAs on improperly translocated ribosomes. Back-translocation proceeds from a post-translocation (POST) complex to a pre-translocation (PRE) complex, thus giving elongation factor G a second chance to translocate the tRNAs correctly. Binds to ribosomes in a GTP-dependent manner. The chain is Elongation factor 4 from Porphyromonas gingivalis (strain ATCC 33277 / DSM 20709 / CIP 103683 / JCM 12257 / NCTC 11834 / 2561).